A 906-amino-acid polypeptide reads, in one-letter code: Catenin alpha-1 (906 aa).

N-acetylthreonine is present on threonine 2. The interval 2–228 is involved in homodimerization; the sequence is TAVHAGNINF…PILYTASQAC (227 aa). Residue lysine 57 forms a Glycyl lysine isopeptide (Lys-Gly) (interchain with G-Cter in SUMO2) linkage. An interaction with JUP and CTNNB1 region spans residues 97 to 148; the sequence is VRKQGDLMKAAAGEFADDPCSSVKRGNMVRAARALLSAVTRLLILADMADVY. Residues serine 264, serine 268, serine 295, and serine 297 each carry the phosphoserine modification. The interaction with alpha-actinin stretch occupies residues 325–394; it reads TRDDRRERIV…AVMDHVSDSF (70 aa). Threonine 634 bears the Phosphothreonine mark. Serine 641 bears the Phosphoserine; by CK2 mark. At threonine 645 the chain carries Phosphothreonine. A phosphoserine; by CK1 mark is found at serine 652 and serine 655. Residue threonine 658 is modified to Phosphothreonine; by CK1. Residue lysine 797 forms a Glycyl lysine isopeptide (Lys-Gly) (interchain with G-Cter in SUMO2) linkage. Serine 851 carries the post-translational modification Phosphoserine. Residues 864 to 880 show a composition bias toward basic and acidic residues; the sequence is PEKKPLVKREKQDETQT. A disordered region spans residues 864 to 894; that stretch reads PEKKPLVKREKQDETQTKIKRASQKKHVNPV. Over residues 881–891 the composition is skewed to basic residues; sequence KIKRASQKKHV.

Belongs to the vinculin/alpha-catenin family. Monomer and homodimer; the monomer preferentially binds to CTNNB1 and the homodimer to actin. Component of an cadherin:catenin adhesion complex composed of at least of CDH26, beta-catenin/CTNNB1, alpha-catenin/CTNNA1 and p120 catenin/CTNND1. Possible component of an E-cadherin/ catenin adhesion complex together with E-cadherin/CDH1 and beta-catenin/CTNNB1 or gamma-catenin/JUP; the complex is located to adherens junctions. The stable association of CTNNA1 is controversial as CTNNA1 was shown not to bind to F-actin when assembled in the complex. Alternatively, the CTNNA1-containing complex may be linked to F-actin by other proteins such as LIMA1. Binds AFDN and F-actin. Interacts with ARHGAP21. Interacts with AJUBA. Interacts with LIMA1. Interacts with vinculin/VCL. Interacts with TJP2/ZO2 (via N-terminus). Interacts with TJP1/ZO1 (via N-terminus). Post-translationally, sumoylated. In terms of processing, phosphorylation seems to contribute to the strength of cell-cell adhesion rather than to the basic capacity for cell-cell adhesion. In terms of tissue distribution, ubiquitously expressed in normal tissues. As to expression, abundantly expressed in brain and cerebellum, also expressed in the placenta, liver, lung, colon, heart, pancreas, stomach and thymus.

The protein resides in the cytoplasm. Its subcellular location is the cytoskeleton. The protein localises to the cell junction. It localises to the adherens junction. It is found in the cell membrane. The protein resides in the nucleus. Associates with the cytoplasmic domain of a variety of cadherins. The association of catenins to cadherins produces a complex which is linked to the actin filament network, and which seems to be of primary importance for cadherins cell-adhesion properties. Can associate with both E- and N-cadherins. Originally believed to be a stable component of E-cadherin/catenin adhesion complexes and to mediate the linkage of cadherins to the actin cytoskeleton at adherens junctions. In contrast, cortical actin was found to be much more dynamic than E-cadherin/catenin complexes and CTNNA1 was shown not to bind to F-actin when assembled in the complex suggesting a different linkage between actin and adherens junctions components. The homodimeric form may regulate actin filament assembly and inhibit actin branching by competing with the Arp2/3 complex for binding to actin filaments. Involved in the regulation of WWTR1/TAZ, YAP1 and TGFB1-dependent SMAD2 and SMAD3 nuclear accumulation. May play a crucial role in cell differentiation. The polypeptide is Catenin alpha-1 (Homo sapiens (Human)).